Here is a 263-residue protein sequence, read N- to C-terminus: Pyridoxine 5'-phosphate synthase (263 aa).

3-amino-2-oxopropyl phosphate is bound at residue Asn15. 17–18 (DH) provides a ligand contact to 1-deoxy-D-xylulose 5-phosphate. Position 26 (Arg26) interacts with 3-amino-2-oxopropyl phosphate. The active-site Proton acceptor is the His51. 1-deoxy-D-xylulose 5-phosphate contacts are provided by Arg53 and His58. The active-site Proton acceptor is the Glu78. Thr108 contacts 1-deoxy-D-xylulose 5-phosphate. The Proton donor role is filled by His199. Residues Gly200 and 221–222 (GH) contribute to the 3-amino-2-oxopropyl phosphate site.

Belongs to the PNP synthase family. In terms of assembly, homooctamer; tetramer of dimers.

The protein resides in the cytoplasm. The enzyme catalyses 3-amino-2-oxopropyl phosphate + 1-deoxy-D-xylulose 5-phosphate = pyridoxine 5'-phosphate + phosphate + 2 H2O + H(+). The protein operates within cofactor biosynthesis; pyridoxine 5'-phosphate biosynthesis; pyridoxine 5'-phosphate from D-erythrose 4-phosphate: step 5/5. In terms of biological role, catalyzes the complicated ring closure reaction between the two acyclic compounds 1-deoxy-D-xylulose-5-phosphate (DXP) and 3-amino-2-oxopropyl phosphate (1-amino-acetone-3-phosphate or AAP) to form pyridoxine 5'-phosphate (PNP) and inorganic phosphate. The polypeptide is Pyridoxine 5'-phosphate synthase (Ralstonia nicotianae (strain ATCC BAA-1114 / GMI1000) (Ralstonia solanacearum)).